A 355-amino-acid chain; its full sequence is Endonuclease III homolog (355 aa).

Positions 44–50 match the Nuclear localization signal motif; it reads PKKFRFQ. Positions 122–149 constitute a HhH domain; that stretch reads FQGDIPDTVEDLMTLPGVGPKMGYLCMS. The Nucleophile; for N-glycosylase activity role is filled by Lys-142. 4 residues coordinate [4Fe-4S] cluster: Cys-210, Cys-217, Cys-220, and Cys-228. The short motif at 252–255 is the Nuclear localization signal element; sequence KKRP. Residues 303–355 are disordered; sequence KEPAADIDVDQKPPVAFHSTTKETRSLRRSKRVAKKSSQYFSQQSLQDIEDLV. Polar residues predominate over residues 338 to 349; sequence KSSQYFSQQSLQ.

The protein belongs to the Nth/MutY family. [4Fe-4S] cluster serves as cofactor.

The protein localises to the nucleus. It localises to the mitochondrion. It carries out the reaction 2'-deoxyribonucleotide-(2'-deoxyribose 5'-phosphate)-2'-deoxyribonucleotide-DNA = a 3'-end 2'-deoxyribonucleotide-(2,3-dehydro-2,3-deoxyribose 5'-phosphate)-DNA + a 5'-end 5'-phospho-2'-deoxyribonucleoside-DNA + H(+). Functionally, bifunctional DNA N-glycosylase with associated apurinic/apyrimidinic (AP) lyase function that catalyzes the first step in base excision repair (BER), the primary repair pathway for the repair of oxidative DNA damage. The DNA N-glycosylase activity releases the damaged DNA base from DNA by cleaving the N-glycosidic bond, leaving an AP site. The AP-lyase activity cleaves the phosphodiester bond 3' to the AP site by a beta-elimination. Primarily recognizes and repairs oxidative base damage of pyrimidines. Also has 8-oxo-7,8-dihydroguanine (8-oxoG) DNA glycosylase activity. Also involved in the repair of 7-methylguanine lesions, although it cannot directly repair alkylated DNA bases. Probably does so via excision of methylformamidopyrimidine (mFapy) lesions, a spontaneous processing product of 7-methylguanine. The sequence is that of Endonuclease III homolog (nth1) from Schizosaccharomyces pombe (strain 972 / ATCC 24843) (Fission yeast).